The sequence spans 642 residues: Threonine--tRNA ligase (642 aa).

Residues 1 to 61 (MPVITLPDGS…ETDSELSIIT (61 aa)) enclose the TGS domain. Positions 243-534 (DHRKIGKQLD…LIEEYAGKFP (292 aa)) are catalytic. Zn(2+)-binding residues include C334, H385, and H511.

The protein belongs to the class-II aminoacyl-tRNA synthetase family. In terms of assembly, homodimer. The cofactor is Zn(2+).

It is found in the cytoplasm. The enzyme catalyses tRNA(Thr) + L-threonine + ATP = L-threonyl-tRNA(Thr) + AMP + diphosphate + H(+). Its function is as follows. Catalyzes the attachment of threonine to tRNA(Thr) in a two-step reaction: L-threonine is first activated by ATP to form Thr-AMP and then transferred to the acceptor end of tRNA(Thr). Also edits incorrectly charged L-seryl-tRNA(Thr). This is Threonine--tRNA ligase from Shewanella halifaxensis (strain HAW-EB4).